Consider the following 108-residue polypeptide: MLKSNLKIDNSFSVMGVVSRLPKRLKSPSGIEHCKFLLEHRSDQIESGFTRQAWLKMPVQISGNQLIEKTQSITVGSKILVVGFITSHKTQSGLCQLVLHAEQIEFID.

Positions 8–108 (IDNSFSVMGV…LHAEQIEFID (101 aa)) constitute an SSB domain.

Belongs to the PriB family. In terms of assembly, homodimer. Interacts with PriA and DnaT. Component of the replication restart primosome. Primosome assembly occurs via a 'hand-off' mechanism. PriA binds to replication forks, subsequently PriB then DnaT bind; DnaT then displaces ssDNA to generate the helicase loading substrate.

Its function is as follows. Involved in the restart of stalled replication forks, which reloads the replicative helicase on sites other than the origin of replication; the PriA-PriB pathway is the major replication restart pathway. During primosome assembly it facilitates complex formation between PriA and DnaT on DNA; stabilizes PriA on DNA. Stimulates the DNA unwinding activity of PriA helicase. This chain is Replication restart protein PriB, found in Haemophilus influenzae (strain ATCC 51907 / DSM 11121 / KW20 / Rd).